A 62-amino-acid chain; its full sequence is [Ser6, Val10, Asp11]-phyllokinin (62 aa).

The N-terminal stretch at 1–22 (MSFLKKSLLLVLFLGLVSFSIC) is a signal peptide. Residues 23-51 (EEEKRETEEEENEDDMDEESEEKKRESPD) constitute a propeptide that is removed on maturation. The tract at residues 24 to 62 (EEKRETEEEENEDDMDEESEEKKRESPDRPPGFSPFRVD) is disordered. Residues 30 to 42 (EEEENEDDMDEES) show a composition bias toward acidic residues.

The protein belongs to the frog skin active peptide (FSAP) family. Bradykinin-related peptide subfamily. As to expression, expressed by the skin glands.

Its subcellular location is the secreted. Its function is as follows. Induces relaxation of rat smooth muscle from tail artery and contraction of that from ileum, urinary bladder and uterus. Binds to both bradykinin receptor B1 (BDKRB1) and B2 (BDKRB2). This Agalychnis spurrelli (Gliding leaf frog) protein is [Ser6, Val10, Asp11]-phyllokinin.